Here is a 431-residue protein sequence, read N- to C-terminus: Zeaxanthin glucosyltransferase (431 aa).

This sequence belongs to the UDP-glycosyltransferase family.

The catalysed reaction is all-trans-zeaxanthin + 2 UDP-alpha-D-glucose = zeaxanthin bis(beta-D-glucoside) + 2 UDP + 2 H(+). It functions in the pathway carotenoid biosynthesis; zeaxanthin diglucoside biosynthesis. In terms of biological role, catalyzes the glycosylation reaction which converts zeaxanthin to zeaxanthin bis(beta-D-glucoside). The reaction proceeds in two steps with the monoglucoside as an intermediate. The chain is Zeaxanthin glucosyltransferase (crtX) from Pantoea ananas (Erwinia uredovora).